The following is a 214-amino-acid chain: Octanoyltransferase (214 aa).

Positions 34–214 constitute a BPL/LPL catalytic domain; that stretch reads GLQKELVWLL…KFNEIFSSFN (181 aa). Substrate is bound by residues 73 to 80, 145 to 147, and 158 to 160; these read RGGKYTYH, AFG, and GVS. The active-site Acyl-thioester intermediate is Cys-176.

The protein belongs to the LipB family.

It localises to the cytoplasm. It carries out the reaction octanoyl-[ACP] + L-lysyl-[protein] = N(6)-octanoyl-L-lysyl-[protein] + holo-[ACP] + H(+). It participates in protein modification; protein lipoylation via endogenous pathway; protein N(6)-(lipoyl)lysine from octanoyl-[acyl-carrier-protein]: step 1/2. Functionally, catalyzes the transfer of endogenously produced octanoic acid from octanoyl-acyl-carrier-protein onto the lipoyl domains of lipoate-dependent enzymes. Lipoyl-ACP can also act as a substrate although octanoyl-ACP is likely to be the physiological substrate. The protein is Octanoyltransferase of Ehrlichia canis (strain Jake).